The following is a 155-amino-acid chain: Ribosomal RNA large subunit methyltransferase H (155 aa).

Residues leucine 73, glycine 104, and 123-128 (LSPLTL) each bind S-adenosyl-L-methionine.

Belongs to the RNA methyltransferase RlmH family. As to quaternary structure, homodimer.

It is found in the cytoplasm. The enzyme catalyses pseudouridine(1915) in 23S rRNA + S-adenosyl-L-methionine = N(3)-methylpseudouridine(1915) in 23S rRNA + S-adenosyl-L-homocysteine + H(+). Specifically methylates the pseudouridine at position 1915 (m3Psi1915) in 23S rRNA. This Ectopseudomonas mendocina (strain ymp) (Pseudomonas mendocina) protein is Ribosomal RNA large subunit methyltransferase H.